Here is a 408-residue protein sequence, read N- to C-terminus: Phosphoglycerate kinase (408 aa).

Residues 24-26, Arg40, 63-66, Arg122, and Arg166 contribute to the substrate site; these read DLN and HLGR. ATP-binding positions include Lys216, Gly304, Glu335, and 364 to 367; that span reads GGDS.

Belongs to the phosphoglycerate kinase family. In terms of assembly, monomer.

The protein resides in the cytoplasm. The enzyme catalyses (2R)-3-phosphoglycerate + ATP = (2R)-3-phospho-glyceroyl phosphate + ADP. The protein operates within carbohydrate degradation; glycolysis; pyruvate from D-glyceraldehyde 3-phosphate: step 2/5. The protein is Phosphoglycerate kinase of Mycolicibacterium smegmatis (strain ATCC 700084 / mc(2)155) (Mycobacterium smegmatis).